Consider the following 582-residue polypeptide: 15-cis-phytoene desaturase, chloroplastic/chromoplastic (582 aa).

The transit peptide at 1 to 110 (MPQIGLVSAV…FRSSPRPTKP (110 aa)) directs the protein to the chloroplast and chromoplast. FAD is bound by residues 140–141 (EA), K148, 165–166 (HI), and Y171. Residue R306 participates in substrate binding. FAD contacts are provided by I348 and D537. Residue A545 participates in substrate binding. An FAD-binding site is contributed by M547.

It belongs to the carotenoid/retinoid oxidoreductase family. Homotetramer. Requires FAD as cofactor.

The protein resides in the plastid. The protein localises to the chloroplast. It localises to the chromoplast. Its subcellular location is the membrane. It carries out the reaction 2 a plastoquinone + 15-cis-phytoene = 9,9',15-tri-cis-zeta-carotene + 2 a plastoquinol. The protein operates within carotenoid biosynthesis; lycopene biosynthesis. Inhibited by the herbicides metflurazon, difunone, fluridone and diflufenican. Functionally, converts phytoene into zeta-carotene via the intermediary of phytofluene by the symmetrical introduction of two double bonds at the C-11 and C-11' positions of phytoene with a concomitant isomerization of two neighboring double bonds at the C9 and C9' positions from trans to cis. The chain is 15-cis-phytoene desaturase, chloroplastic/chromoplastic (PDS) from Capsicum annuum (Capsicum pepper).